Reading from the N-terminus, the 366-residue chain is UDP-N-acetylenolpyruvoylglucosamine reductase (366 aa).

The FAD-binding PCMH-type domain occupies 29-203 (VGPVARTLVT…LEVEFALDAS (175 aa)). The active site involves arginine 177. The active-site Proton donor is serine 258. Glutamate 358 is a catalytic residue.

This sequence belongs to the MurB family. Requires FAD as cofactor.

The protein localises to the cytoplasm. The enzyme catalyses UDP-N-acetyl-alpha-D-muramate + NADP(+) = UDP-N-acetyl-3-O-(1-carboxyvinyl)-alpha-D-glucosamine + NADPH + H(+). It participates in cell wall biogenesis; peptidoglycan biosynthesis. Functionally, cell wall formation. The chain is UDP-N-acetylenolpyruvoylglucosamine reductase from Mycobacterium marinum (strain ATCC BAA-535 / M).